The following is a 244-amino-acid chain: Pyridoxine 5'-phosphate synthase (244 aa).

Asn12 contributes to the 3-amino-2-oxopropyl phosphate binding site. 14–15 (DH) is a 1-deoxy-D-xylulose 5-phosphate binding site. A 3-amino-2-oxopropyl phosphate-binding site is contributed by Arg23. Residue His48 is the Proton acceptor of the active site. 1-deoxy-D-xylulose 5-phosphate contacts are provided by Arg50 and His55. Glu75 serves as the catalytic Proton acceptor. Thr105 contacts 1-deoxy-D-xylulose 5-phosphate. His196 functions as the Proton donor in the catalytic mechanism. Residues Gly197 and 218 to 219 (GH) contribute to the 3-amino-2-oxopropyl phosphate site.

The protein belongs to the PNP synthase family. Homooctamer; tetramer of dimers.

It is found in the cytoplasm. The enzyme catalyses 3-amino-2-oxopropyl phosphate + 1-deoxy-D-xylulose 5-phosphate = pyridoxine 5'-phosphate + phosphate + 2 H2O + H(+). The protein operates within cofactor biosynthesis; pyridoxine 5'-phosphate biosynthesis; pyridoxine 5'-phosphate from D-erythrose 4-phosphate: step 5/5. Functionally, catalyzes the complicated ring closure reaction between the two acyclic compounds 1-deoxy-D-xylulose-5-phosphate (DXP) and 3-amino-2-oxopropyl phosphate (1-amino-acetone-3-phosphate or AAP) to form pyridoxine 5'-phosphate (PNP) and inorganic phosphate. The sequence is that of Pyridoxine 5'-phosphate synthase from Alcanivorax borkumensis (strain ATCC 700651 / DSM 11573 / NCIMB 13689 / SK2).